Consider the following 603-residue polypeptide: Aspartate--tRNA(Asp/Asn) ligase (603 aa).

The segment at 205-208 is aspartate; that stretch reads QLFK. Arginine 227 is a binding site for L-aspartate. ATP contacts are provided by residues 227–229 and glutamine 236; that span reads RDE. Residue histidine 463 coordinates L-aspartate. An ATP-binding site is contributed by glutamate 497. Arginine 504 is a binding site for L-aspartate. 549–552 provides a ligand contact to ATP; that stretch reads GMDR.

The protein belongs to the class-II aminoacyl-tRNA synthetase family. Type 1 subfamily. As to quaternary structure, homodimer.

It localises to the cytoplasm. It catalyses the reaction tRNA(Asx) + L-aspartate + ATP = L-aspartyl-tRNA(Asx) + AMP + diphosphate. Functionally, aspartyl-tRNA synthetase with relaxed tRNA specificity since it is able to aspartylate not only its cognate tRNA(Asp) but also tRNA(Asn). Reaction proceeds in two steps: L-aspartate is first activated by ATP to form Asp-AMP and then transferred to the acceptor end of tRNA(Asp/Asn). The sequence is that of Aspartate--tRNA(Asp/Asn) ligase from Anaeromyxobacter dehalogenans (strain 2CP-C).